The sequence spans 112 residues: Na(+)/H(+) antiporter subunit C (112 aa).

A run of 3 helical transmembrane segments spans residues 4-21, 28-50, and 70-92; these read LMSI…YLIL, VVVG…AGLQ, and QALI…VLAY.

Belongs to the CPA3 antiporters (TC 2.A.63) subunit C family. In terms of assembly, forms a heterooligomeric complex that consists of seven subunits: MrpA, MrpB, MrpC, MrpD, MrpE, MrpF and MrpG.

The protein localises to the cell membrane. In terms of biological role, mnh complex is a Na(+)Li(+)/H(+) antiporter involved in Na(+) and/or Li(+) excretion and Na(+) resistance. Na(+)/H(+) antiport consumes a transmembrane electrical potential, and is thus inferred to be electrogenic. Does not transport K(+), Ca(2+) or Mg(2+). The sequence is that of Na(+)/H(+) antiporter subunit C (mrpC) from Alkalihalophilus pseudofirmus (strain ATCC BAA-2126 / JCM 17055 / OF4) (Bacillus pseudofirmus).